Here is a 693-residue protein sequence, read N- to C-terminus: Phosphoribosylformylglycinamidine synthase subunit PurL (693 aa).

His34 is a catalytic residue. Residues Tyr37 and Lys76 each coordinate ATP. Glu78 serves as a coordination point for Mg(2+). Substrate-binding positions include Ser79–His82 and Arg101. His80 serves as the catalytic Proton acceptor. Asp102 contributes to the Mg(2+) binding site. Residue Gln222 coordinates substrate. Position 248 (Asp248) interacts with Mg(2+). Residue Glu292–Gln294 coordinates substrate. ATP contacts are provided by Asp470 and Gly507. Ser510 contributes to the substrate binding site.

The protein belongs to the FGAMS family. Monomer. Part of the FGAM synthase complex composed of 1 PurL, 1 PurQ and 2 PurS subunits.

Its subcellular location is the cytoplasm. The catalysed reaction is N(2)-formyl-N(1)-(5-phospho-beta-D-ribosyl)glycinamide + L-glutamine + ATP + H2O = 2-formamido-N(1)-(5-O-phospho-beta-D-ribosyl)acetamidine + L-glutamate + ADP + phosphate + H(+). The protein operates within purine metabolism; IMP biosynthesis via de novo pathway; 5-amino-1-(5-phospho-D-ribosyl)imidazole from N(2)-formyl-N(1)-(5-phospho-D-ribosyl)glycinamide: step 1/2. Functionally, part of the phosphoribosylformylglycinamidine synthase complex involved in the purines biosynthetic pathway. Catalyzes the ATP-dependent conversion of formylglycinamide ribonucleotide (FGAR) and glutamine to yield formylglycinamidine ribonucleotide (FGAM) and glutamate. The FGAM synthase complex is composed of three subunits. PurQ produces an ammonia molecule by converting glutamine to glutamate. PurL transfers the ammonia molecule to FGAR to form FGAM in an ATP-dependent manner. PurS interacts with PurQ and PurL and is thought to assist in the transfer of the ammonia molecule from PurQ to PurL. This chain is Phosphoribosylformylglycinamidine synthase subunit PurL, found in Pyrobaculum neutrophilum (strain DSM 2338 / JCM 9278 / NBRC 100436 / V24Sta) (Thermoproteus neutrophilus).